The following is a 426-amino-acid chain: Tol-Pal system protein TolB (426 aa).

The signal sequence occupies residues 1 to 25 (MNAMSRISRRIFLALALSLAGLAQA).

It belongs to the TolB family. In terms of assembly, the Tol-Pal system is composed of five core proteins: the inner membrane proteins TolA, TolQ and TolR, the periplasmic protein TolB and the outer membrane protein Pal. They form a network linking the inner and outer membranes and the peptidoglycan layer.

It is found in the periplasm. Functionally, part of the Tol-Pal system, which plays a role in outer membrane invagination during cell division and is important for maintaining outer membrane integrity. The sequence is that of Tol-Pal system protein TolB from Dechloromonas aromatica (strain RCB).